The sequence spans 466 residues: D-inositol 3-phosphate glycosyltransferase (466 aa).

Residues methionine 1–glycine 12 show a composition bias toward low complexity. The segment at methionine 1 to proline 22 is disordered. Position 43 (histidine 43) interacts with 1D-myo-inositol 3-phosphate. UDP-N-acetyl-alpha-D-glucosamine contacts are provided by residues glutamine 49–proline 50 and glycine 57. Residues aspartate 54–asparagine 59, lysine 112, tyrosine 145, threonine 169, and arginine 189 contribute to the 1D-myo-inositol 3-phosphate site. UDP-N-acetyl-alpha-D-glucosamine contacts are provided by arginine 263, lysine 268, and glutamine 321. Mg(2+) contacts are provided by phenylalanine 330, histidine 331, and valine 333. Positions 343 and 351 each coordinate UDP-N-acetyl-alpha-D-glucosamine. Threonine 357 is a binding site for Mg(2+). The disordered stretch occupies residues valine 446–alanine 466.

Belongs to the glycosyltransferase group 1 family. MshA subfamily. In terms of assembly, homodimer.

It catalyses the reaction 1D-myo-inositol 3-phosphate + UDP-N-acetyl-alpha-D-glucosamine = 1D-myo-inositol 2-acetamido-2-deoxy-alpha-D-glucopyranoside 3-phosphate + UDP + H(+). Its function is as follows. Catalyzes the transfer of a N-acetyl-glucosamine moiety to 1D-myo-inositol 3-phosphate to produce 1D-myo-inositol 2-acetamido-2-deoxy-glucopyranoside 3-phosphate in the mycothiol biosynthesis pathway. This is D-inositol 3-phosphate glycosyltransferase from Mycobacterium marinum (strain ATCC BAA-535 / M).